Here is a 442-residue protein sequence, read N- to C-terminus: MRLSRYFLPILKENPKEAEIVSHRLMLRSGMIRQQSAGIYSWLPIGLKVLNKVCTIIREEQNRAGANEILMPTIQSADLWRESGRYDAYGKEMLRIQDRQKREMLFGPTNEEMVTDIFRSYVRSYKDLPLNLYHIQWKFRDEVRPRFGVMRSREFLMKDAYSFDLDYEGAKMAYYRMFVSYLRTFARVGLQAIPMRADTGPIGGDLSHEFIILAETGESQVYCDRAYLDLAVPGADTDFRNDAQLTDIVTRWTTPYAATDEMHDEADWAKVKPESQVSARGIEVGHIFHFGTKYSEPMGAKVQGPDGKEHLVSMGSYGIGPSRLVAAAIEASHDDAGIIWPKTIAPFGAGIVNMKPGDEGCDGVSEKLYEALTNAGVDPLLDDKDERPGAKFATMDLIGLPTQVIVGPRGVAAGEVEVKDRKTGERQSLGIKAAINMLTAQA.

This sequence belongs to the class-II aminoacyl-tRNA synthetase family. ProS type 2 subfamily. Homodimer.

The protein localises to the cytoplasm. The catalysed reaction is tRNA(Pro) + L-proline + ATP = L-prolyl-tRNA(Pro) + AMP + diphosphate. In terms of biological role, catalyzes the attachment of proline to tRNA(Pro) in a two-step reaction: proline is first activated by ATP to form Pro-AMP and then transferred to the acceptor end of tRNA(Pro). The protein is Proline--tRNA ligase of Brucella abortus (strain S19).